The chain runs to 257 residues: A-factor type gamma-butyrolactone 1'-reductase (1S-forming) (257 aa).

Residue Tyr161 is the Proton acceptor of the active site.

Belongs to the short-chain dehydrogenases/reductases (SDR) family. Homodimer.

The enzyme catalyses a (3R,4R)-3-[(1S)-1-hydroxyalkyl]-4-(hydroxymethyl)oxolan-2-one + NADP(+) = a (3R,4R)-3-alkanoyl-4-(hydroxymethyl)oxolan-2-one + NADPH + H(+). Involved in the biosynthesis of virginiae butanolide (VB), which regulates the production of antibiotic virginiamycin. Catalyzes the reduction of 6-dehydro-VB-A to VB-A, the last catalytic step in VB biosynthesis. In vitro, can use various synthetic A-factor-type analogs. The protein is A-factor type gamma-butyrolactone 1'-reductase (1S-forming) of Streptomyces virginiae (Streptomyces cinnamonensis).